Here is a 219-residue protein sequence, read N- to C-terminus: MIDVRKYIDNAALKPHLSEKEIEEFVLKSEELGIYAVCVNPYHVKLASSIAKKVKVCCVIGFPLGLNKTSVKVKEAVEAVRDGAQELDIVWNLSAFKSEKYDFVVEELKEIFRETPSAVHKVIVETPYLNEEEIKKAVEICIEAGADFIKTSTGFAPRGTTLEEVRLIKSSAKGRIKVKASGGIRDLETAISMIEAGADRIGTSSGISIAEEFLKRHLI.

Asp-88 acts as the Proton donor/acceptor in catalysis. The Schiff-base intermediate with acetaldehyde role is filled by Lys-150. Lys-179 acts as the Proton donor/acceptor in catalysis.

The protein belongs to the DeoC/FbaB aldolase family. DeoC type 1 subfamily.

Its subcellular location is the cytoplasm. It carries out the reaction 2-deoxy-D-ribose 5-phosphate = D-glyceraldehyde 3-phosphate + acetaldehyde. Its pathway is carbohydrate degradation; 2-deoxy-D-ribose 1-phosphate degradation; D-glyceraldehyde 3-phosphate and acetaldehyde from 2-deoxy-alpha-D-ribose 1-phosphate: step 2/2. Its function is as follows. Catalyzes a reversible aldol reaction between acetaldehyde and D-glyceraldehyde 3-phosphate to generate 2-deoxy-D-ribose 5-phosphate. The chain is Deoxyribose-phosphate aldolase from Aquifex aeolicus (strain VF5).